The chain runs to 630 residues: MNNFMKNIGFYLVLIALSILVAQFFVDTDVNTIVDTDVNTIKDFTYSDLINYVEQGKINEVTIIGNEAVKGTYNHREFNVPIPPEAVPDLMAELREADVEIKTEPEPTAPWWTGMLAYILPIILLIGAWFFIMQRMQGGGSQMMSFGKSRARLSENGKKVTFEDVANYEEVKEELQEVVEFLKNPDKFTRMGAKVPKGVLLVGPPGTGKTLLARAVAGEAGVPFFIISGSDFVEMFVGVGASRVRDLFEQGKKNAPCIIFIDELDAVGRQRGAGLGGGHDEREQTLNQLLVEMDGFEPNEGIIVMAATNRPDVLDPALLRPGRFDRQVVVDKPDVKGRMGILKIHLRNKPVADDVDVEVLAKRTPGFTGADMENLANEAAILAVRRRKNKITMEDFDDAIDKVIAGPAKKSKVMSERERKLVAYHETGHALVGDLLEHADRTHKISIVPRGRAGGMRWALPKEDKNFMSKQELLDQITVLLGGRASESIFLEDISTGAQNDLERATKLARAMVTEYGMSEKLGPLTLGHKHDEQIFLGRDISRQRNYSEEIAAEIDKEVSSIIEYCYQRAEKILQENTAKVERIVRELLDRETLDAEQLQKLIKGEPLDDDSIDNSTDENENREHENNDK.

Residues 1-7 (MNNFMKN) lie on the Cytoplasmic side of the membrane. A helical transmembrane segment spans residues 8-28 (IGFYLVLIALSILVAQFFVDT). The Periplasmic portion of the chain corresponds to 29–111 (DVNTIVDTDV…KTEPEPTAPW (83 aa)). The helical transmembrane segment at 112–132 (WTGMLAYILPIILLIGAWFFI) threads the bilayer. Residues 133–630 (MQRMQGGGSQ…ENREHENNDK (498 aa)) are Cytoplasmic-facing. 203–210 (GPPGTGKT) contacts ATP. His-425 contributes to the Zn(2+) binding site. Glu-426 is an active-site residue. Positions 429 and 501 each coordinate Zn(2+). The segment at 601–630 (KLIKGEPLDDDSIDNSTDENENREHENNDK) is disordered. The span at 608-619 (LDDDSIDNSTDE) shows a compositional bias: acidic residues. Basic and acidic residues predominate over residues 620–630 (NENREHENNDK).

The protein in the central section; belongs to the AAA ATPase family. It in the C-terminal section; belongs to the peptidase M41 family. As to quaternary structure, homohexamer. Requires Zn(2+) as cofactor.

The protein localises to the cell inner membrane. Functionally, acts as a processive, ATP-dependent zinc metallopeptidase for both cytoplasmic and membrane proteins. Plays a role in the quality control of integral membrane proteins. This is ATP-dependent zinc metalloprotease FtsH from Halothermothrix orenii (strain H 168 / OCM 544 / DSM 9562).